Consider the following 222-residue polypeptide: Protein-L-isoaspartate O-methyltransferase (222 aa).

Ser69 is an active-site residue.

The protein belongs to the methyltransferase superfamily. L-isoaspartyl/D-aspartyl protein methyltransferase family.

It is found in the cytoplasm. It catalyses the reaction [protein]-L-isoaspartate + S-adenosyl-L-methionine = [protein]-L-isoaspartate alpha-methyl ester + S-adenosyl-L-homocysteine. Functionally, catalyzes the methyl esterification of L-isoaspartyl residues in peptides and proteins that result from spontaneous decomposition of normal L-aspartyl and L-asparaginyl residues. It plays a role in the repair and/or degradation of damaged proteins. The chain is Protein-L-isoaspartate O-methyltransferase from Nitrosomonas europaea (strain ATCC 19718 / CIP 103999 / KCTC 2705 / NBRC 14298).